The primary structure comprises 570 residues: Phosphocholine hydrolase Lem3 (570 aa).

Its subcellular location is the secreted. The protein localises to the host cytoplasm. The catalysed reaction is [Rab1 protein]-O-phosphocholine-L-serine + H2O = [Rab1 protein]-L-serine + phosphocholine + H(+). Its function is as follows. Virulence effector that plays a role in hijacking the host vesicular trafficking by recruiting the small guanosine triphosphatase (GTPase) Rab1 to the cytosolic face of the Legionella-containing vacuole (LCVs). Acts as a phosphocholine hydrolase by mediating the hydrolysis of phosphocholine to Ser residues of host RAB1 (RAB1A, RAB1B or RAB1C). Dephosphocholination of target proteins restores accessibility to GTPase effector LepB. Can act on both GDP-bound and GTP-bound Rab proteins. The protein is Phosphocholine hydrolase Lem3 (lem3) of Legionella pneumophila subsp. pneumophila (strain Philadelphia 1 / ATCC 33152 / DSM 7513).